The following is a 486-amino-acid chain: Palmitoyltransferase pfa4 (486 aa).

At M1–R15 the chain is on the cytoplasmic side. Residues F16–F36 traverse the membrane as a helical segment. At N37–E51 the chain is on the lumenal side. A helical transmembrane segment spans residues S52–V72. Residues D73–H146 are Cytoplasmic-facing. Residues P81–N91 show a composition bias toward basic and acidic residues. The tract at residues P81–A101 is disordered. Positions K102 to V152 constitute a DHHC domain. Residue C132 is the S-palmitoyl cysteine intermediate of the active site. The helical transmembrane segment at F147–W166 threads the bilayer. Topologically, residues T167–H178 are lumenal. Residues V179–F201 traverse the membrane as a helical segment. The Cytoplasmic portion of the chain corresponds to A202 to E486. Residues N314–E420 form a disordered region. Composition is skewed to basic and acidic residues over residues D324 to A333 and L346 to R376. Over residues E386 to G399 the composition is skewed to acidic residues.

This sequence belongs to the DHHC palmitoyltransferase family. PFA4 subfamily.

It is found in the endoplasmic reticulum membrane. It carries out the reaction L-cysteinyl-[protein] + hexadecanoyl-CoA = S-hexadecanoyl-L-cysteinyl-[protein] + CoA. In terms of biological role, mediates the reversible addition of palmitate to target proteins, thereby regulating their membrane association and biological function. This chain is Palmitoyltransferase pfa4, found in Neurospora crassa (strain ATCC 24698 / 74-OR23-1A / CBS 708.71 / DSM 1257 / FGSC 987).